Here is a 411-residue protein sequence, read N- to C-terminus: Diaminobutyrate--2-oxoglutarate transaminase (411 aa).

K262 is subject to N6-(pyridoxal phosphate)lysine.

The protein belongs to the class-III pyridoxal-phosphate-dependent aminotransferase family. Pyridoxal 5'-phosphate serves as cofactor.

It carries out the reaction L-2,4-diaminobutanoate + 2-oxoglutarate = L-aspartate 4-semialdehyde + L-glutamate. The protein operates within amine and polyamine biosynthesis; ectoine biosynthesis; L-ectoine from L-aspartate 4-semialdehyde: step 1/3. In terms of biological role, catalyzes reversively the conversion of L-aspartate beta-semialdehyde (ASA) to L-2,4-diaminobutyrate (DABA) by transamination with L-glutamate. The sequence is that of Diaminobutyrate--2-oxoglutarate transaminase (ectB) from Vibrio cholerae serotype O1 (strain ATCC 39315 / El Tor Inaba N16961).